The sequence spans 297 residues: Ribosomal RNA small subunit methyltransferase H (297 aa).

S-adenosyl-L-methionine is bound by residues 37–39 (GGH), Asp-56, Phe-87, Asp-102, and His-109.

The protein belongs to the methyltransferase superfamily. RsmH family.

The protein resides in the cytoplasm. The catalysed reaction is cytidine(1402) in 16S rRNA + S-adenosyl-L-methionine = N(4)-methylcytidine(1402) in 16S rRNA + S-adenosyl-L-homocysteine + H(+). In terms of biological role, specifically methylates the N4 position of cytidine in position 1402 (C1402) of 16S rRNA. This Borrelia turicatae (strain 91E135) protein is Ribosomal RNA small subunit methyltransferase H.